The primary structure comprises 98 residues: MDIERGIRVAVDTGKVILGSNKAIQAIKLGNGELAIMAENTPKNVKADIEAYSKLSEMPVYTFEGSSVELGSICGKPFTVSVLIIQEPGDSNILEIKE.

The protein belongs to the eukaryotic ribosomal protein eL30 family.

This is Large ribosomal subunit protein eL30 from Methanosphaera stadtmanae (strain ATCC 43021 / DSM 3091 / JCM 11832 / MCB-3).